Here is a 295-residue protein sequence, read N- to C-terminus: Pyridoxal 5'-phosphate synthase subunit PdxS (295 aa).

Residue Asp25 participates in D-ribose 5-phosphate binding. The Schiff-base intermediate with D-ribose 5-phosphate role is filled by Lys82. Position 154 (Gly154) interacts with D-ribose 5-phosphate. Arg166 provides a ligand contact to D-glyceraldehyde 3-phosphate. D-ribose 5-phosphate-binding positions include Gly215 and 236–237; that span reads GS.

This sequence belongs to the PdxS/SNZ family. In the presence of PdxT, forms a dodecamer of heterodimers.

It carries out the reaction aldehydo-D-ribose 5-phosphate + D-glyceraldehyde 3-phosphate + L-glutamine = pyridoxal 5'-phosphate + L-glutamate + phosphate + 3 H2O + H(+). Its pathway is cofactor biosynthesis; pyridoxal 5'-phosphate biosynthesis. Functionally, catalyzes the formation of pyridoxal 5'-phosphate from ribose 5-phosphate (RBP), glyceraldehyde 3-phosphate (G3P) and ammonia. The ammonia is provided by the PdxT subunit. Can also use ribulose 5-phosphate and dihydroxyacetone phosphate as substrates, resulting from enzyme-catalyzed isomerization of RBP and G3P, respectively. The polypeptide is Pyridoxal 5'-phosphate synthase subunit PdxS (Staphylococcus epidermidis (strain ATCC 35984 / DSM 28319 / BCRC 17069 / CCUG 31568 / BM 3577 / RP62A)).